We begin with the raw amino-acid sequence, 268 residues long: Purine nucleoside phosphorylase (268 aa).

Residues S36, H68, 88–90 (RIH), and A120 contribute to the phosphate site. E189 lines the a purine D-ribonucleoside pocket. S208 serves as a coordination point for phosphate. Residue N231 coordinates a purine D-ribonucleoside.

This sequence belongs to the PNP/MTAP phosphorylase family. As to quaternary structure, homotrimer.

The enzyme catalyses a purine 2'-deoxy-D-ribonucleoside + phosphate = a purine nucleobase + 2-deoxy-alpha-D-ribose 1-phosphate. It functions in the pathway purine metabolism; purine nucleoside salvage. The purine nucleoside phosphorylases catalyze the phosphorolytic breakdown of the N-glycosidic bond in the beta-(deoxy)ribonucleoside molecules, with the formation of the corresponding free purine bases and pentose-1-phosphate. Cleaves guanosine, inosine, 2'-deoxyguanosine and 2'-deoxyinosine. The chain is Purine nucleoside phosphorylase (punA) from Mycobacterium leprae (strain TN).